A 240-amino-acid polypeptide reads, in one-letter code: Putative exosome complex component RRP41 (240 aa).

It belongs to the RNase PH family. Component of the RNA exosome complex.

The protein resides in the cytoplasm. It is found in the nucleus. The protein localises to the nucleolus. It localises to the nucleoplasm. Functionally, non-catalytic component of the RNA exosome complex which has 3'-&gt;5' exoribonuclease activity and participates in a multitude of cellular RNA processing and degradation events. This chain is Putative exosome complex component RRP41 (exos-4.1), found in Caenorhabditis briggsae.